A 240-amino-acid chain; its full sequence is Manganese transport system ATP-binding protein MntB (240 aa).

Positions 1–233 constitute an ABC transporter domain; that stretch reads MEIQGLTIAY…KIQFAYGDAP (233 aa). 33–40 contacts ATP; the sequence is GPNGAGKS.

It belongs to the ABC transporter superfamily.

It is found in the cell membrane. Functionally, this protein is probably a component of a manganese permease, a binding protein-dependent, ATP-driven transport system. Probably responsible for energy coupling to the transport system. The chain is Manganese transport system ATP-binding protein MntB (mntB) from Listeria monocytogenes serovar 1/2a (strain ATCC BAA-679 / EGD-e).